The sequence spans 170 residues: MKLHDLRPAEGSHRKRKRIGRGHGSGKVKTGGKGMMGQKARSGPGPYRTFEGGQNRLVKRMPFKRGFTNKFRVEYEVVNVGSLVDWPTELEVTPETLLARRLVRRKKMPVKILGDGELNQPLVIKAHKFSASARQKIEAAGGKAIDLTWIVERHSRSRGPNPSMRNARQS.

Basic and acidic residues predominate over residues methionine 1–serine 12. The disordered stretch occupies residues methionine 1–phenylalanine 50. Basic residues predominate over residues histidine 13–glycine 26.

Belongs to the universal ribosomal protein uL15 family. As to quaternary structure, part of the 50S ribosomal subunit.

Functionally, binds to the 23S rRNA. This is Large ribosomal subunit protein uL15 from Chloroflexus aggregans (strain MD-66 / DSM 9485).